Here is a 432-residue protein sequence, read N- to C-terminus: Serine/threonine-protein phosphatase 2A activator 1 (432 aa).

It belongs to the PTPA-type PPIase family.

It localises to the cytoplasm. It is found in the nucleus. The enzyme catalyses [protein]-peptidylproline (omega=180) = [protein]-peptidylproline (omega=0). Functionally, PPIases accelerate the folding of proteins. It catalyzes the cis-trans isomerization of proline imidic peptide bonds in oligopeptides. Acts as a regulatory subunit for PP2A-like phosphatases modulating their activity or substrate specificity, probably by inducing a conformational change in the catalytic subunit, a direct target of the PPIase. Can reactivate inactive phosphatase PP2A-phosphatase methylesterase complexes (PP2Ai) in presence of ATP and Mg(2+) by dissociating the inactive form from the complex. The chain is Serine/threonine-protein phosphatase 2A activator 1 (rrd1) from Emericella nidulans (strain FGSC A4 / ATCC 38163 / CBS 112.46 / NRRL 194 / M139) (Aspergillus nidulans).